A 539-amino-acid polypeptide reads, in one-letter code: MLGQMMYQPLLISSLIDHAARYHGEAQIWSVSTEGGVEETNWAGIADNARRLGSVLTDAGLAPQSRVATLAWNNRRHLEIYYGVSGAGFVLHTINPRLFPEQLVYILNHAEDRILFFDATFLPLVEGIRPHLTTVERLVLMGPRDEAAAARIEGLEFYDEFVATGDAGFDWPDLDERTASSLCYTSGTTGNPKGVLYSHRSTVLHSFGSNTRDCIGFSARDVVMPVVPMFHVNAWGTPYACAMSGSCMVLPGPDLHGEALVGLIDRYRVTIALGVPTIWQGLLATARAKGSTLESLTRTVIGGAACPPSMIAEFRDRYGVDTVHAWGMSEMSPLGTTNQPLAKHGALPIEAQHKLRENQGRPPYGVELKIVDDDGNTLPNDGQTQGDLMVRGHWVLDSYFQLQDQPILSDGWFATGDVATLDRDGYMTIRDRSKDIIKSGGEWISSVELENIAVAHPKLATAAVIGVPHPKWDERPLLVAVKAEGETPDEAELLAFFDGKIAKWQVPDRVVFVEALPLNATGKVLKRTLREQFRDVLTG.

A Mg(2+)-binding site is contributed by Thr185. His231, Gly303, His324, Ala325, and Ser329 together coordinate ATP. A Mg(2+)-binding site is contributed by Glu330. Gln359, Asp417, Arg432, and Lys523 together coordinate ATP.

This sequence belongs to the ATP-dependent AMP-binding enzyme family. Homodimer. Mg(2+) serves as cofactor.

The enzyme catalyses 3-(methylsulfanyl)propanoate + ATP + CoA = 3-(methylsulfanyl)propanoyl-CoA + AMP + diphosphate. Its pathway is lipid metabolism; fatty acid metabolism. Its activity is regulated as follows. Activated by LiCl and NH(4)Cl. Inhibited by dimethylsulfoniopropionate (DMSP). MMPA concentrations above 2 mM relieve the DMSP inhibition and 80% of activity is regained at an MMPA concentration of 8 mM. In terms of biological role, involved in the assimilation of dimethylsulphoniopropionate (DMSP), an important compound in the fixation of carbon in marine phytoplankton. Catalyzes the ATP-dependent ligation of methylmercaptopropionate (MMPA) and CoA to yield methylmercaptopropionate-CoA (MMPA-CoA). It is also active with short-chain-fatty-acid (carboxylic acids up to six carbons in length). The polypeptide is 3-methylmercaptopropionyl-CoA ligase (Ruegeria pomeroyi (strain ATCC 700808 / DSM 15171 / DSS-3) (Silicibacter pomeroyi)).